The sequence spans 203 residues: Amelogenin, Y isoform (203 aa).

The first 16 residues, 1–16 (MGTWILFACLVGAAFA), serve as a signal peptide directing secretion. The tract at residues 116-180 (MPVPGQQSMT…PPLPPMFPMR (65 aa)) is disordered. Positions 120–130 (GQQSMTPTQHH) are enriched in polar residues. Over residues 131-142 (QPNLPLPAQQPF) the composition is skewed to low complexity. Residues 143-180 (QPQPVQPLPHQPMQPQPPVQPMQPLLPQPPLPPMFPMR) are compositionally biased toward pro residues.

Belongs to the amelogenin family.

The protein localises to the secreted. Its subcellular location is the extracellular space. It localises to the extracellular matrix. Functionally, plays a role in biomineralization. Seems to regulate the formation of crystallites during the secretory stage of tooth enamel development. Thought to play a major role in the structural organization and mineralization of developing enamel. The protein is Amelogenin, Y isoform (AMELY) of Pan troglodytes (Chimpanzee).